The primary structure comprises 234 residues: BTB/POZ domain-containing protein KCTD5 (234 aa).

Residue A2 is modified to N-acetylalanine. Positions 44–146 (KWVRLNVGGT…LVKDKIRERD (103 aa)) constitute a BTB domain. The tract at residues 213 to 234 (PYGTTSEPSEKAKILQERGSRM) is disordered. The span at 220–234 (PSEKAKILQERGSRM) shows a compositional bias: basic and acidic residues.

As to quaternary structure, homopentamer. Interacts (via C-terminus) with GRASP55/GORASP2. Interacts with CUL3 and with ubiquitinated proteins. Interacts with CRY1.

It is found in the cytoplasm. It localises to the cytosol. The protein localises to the nucleus. In terms of biological role, its interaction with CUL3 suggests that it may act as a substrate adapter in some E3 ligase complex. Does not affect the function of Kv channel Kv2.1/KCNB1, Kv1.2/KCNA2, Kv4.2/KCND2 and Kv3.4/KCNC4. In Rattus norvegicus (Rat), this protein is BTB/POZ domain-containing protein KCTD5 (Kctd5).